Reading from the N-terminus, the 279-residue chain is 3-methyl-2-oxobutanoate hydroxymethyltransferase (279 aa).

Positions 44 and 83 each coordinate Mg(2+). 3-methyl-2-oxobutanoate contacts are provided by residues 44 to 45 (DS), D83, and K113. E115 is a binding site for Mg(2+). The Proton acceptor role is filled by E182.

This sequence belongs to the PanB family. Homodecamer; pentamer of dimers. Mg(2+) serves as cofactor.

Its subcellular location is the cytoplasm. It carries out the reaction 3-methyl-2-oxobutanoate + (6R)-5,10-methylene-5,6,7,8-tetrahydrofolate + H2O = 2-dehydropantoate + (6S)-5,6,7,8-tetrahydrofolate. The protein operates within cofactor biosynthesis; (R)-pantothenate biosynthesis; (R)-pantoate from 3-methyl-2-oxobutanoate: step 1/2. Functionally, catalyzes the reversible reaction in which hydroxymethyl group from 5,10-methylenetetrahydrofolate is transferred onto alpha-ketoisovalerate to form ketopantoate. In Dehalococcoides mccartyi (strain ATCC BAA-2100 / JCM 16839 / KCTC 5957 / BAV1), this protein is 3-methyl-2-oxobutanoate hydroxymethyltransferase.